The following is a 64-amino-acid chain: Large ribosomal subunit protein bL35c (64 aa).

It belongs to the bacterial ribosomal protein bL35 family.

The protein resides in the plastid. Its subcellular location is the chloroplast. The protein is Large ribosomal subunit protein bL35c of Phaeodactylum tricornutum (strain CCAP 1055/1).